The chain runs to 340 residues: Manganese-dependent ADP-ribose/CDP-alcohol diphosphatase (340 aa).

Met1 bears the N-acetylmethionine mark. Zn(2+) is bound by residues Asp25, Gln27, Asp74, Asn110, His241, His278, and His280.

Belongs to the ADPRibase-Mn family. In terms of assembly, monomer. The cofactor is Mg(2+).

The catalysed reaction is CDP-choline + H2O = phosphocholine + CMP + 2 H(+). It carries out the reaction ADP-D-ribose + H2O = D-ribose 5-phosphate + AMP + 2 H(+). It catalyses the reaction CDP-glycerol + H2O = sn-glycerol 3-phosphate + CMP + 2 H(+). In terms of biological role, hydrolyzes ADP-ribose, IDP-ribose, CDP-glycerol, CDP-choline and CDP-ethanolamine, but not other non-reducing ADP-sugars or CDP-glucose. May be involved in immune cell signaling as suggested by the second-messenger role of ADP-ribose, which activates TRPM2 as a mediator of oxidative/nitrosative stress. The polypeptide is Manganese-dependent ADP-ribose/CDP-alcohol diphosphatase (Adprm) (Mus musculus (Mouse)).